Consider the following 119-residue polypeptide: Large ribosomal subunit protein uL18 (119 aa).

Residues 1 to 23 form a disordered region; that stretch reads MSQVDKAARRQKIKDRSRVSVQG.

Belongs to the universal ribosomal protein uL18 family. In terms of assembly, part of the 50S ribosomal subunit; part of the 5S rRNA/L5/L18/L25 subcomplex. Contacts the 5S and 23S rRNAs.

This is one of the proteins that bind and probably mediate the attachment of the 5S RNA into the large ribosomal subunit, where it forms part of the central protuberance. The chain is Large ribosomal subunit protein uL18 from Chlorobium chlorochromatii (strain CaD3).